Consider the following 442-residue polypeptide: MLAETPLLETTLERELATLAVGRRYGKVVEVVGTMLKVAGVQVSLGEVCELRQRDGTLLQRAEVVGFSRDLALLAPFGELIGLSRETRVIGLGRPLAVPVGPALLGRVLDGLGEPSDGQGAIACDTWVPIQAQAPDPMRRRLIEHPMPTGVRIVDGLMTLGEGQRMGIFAAAGVGKSTLMGMFARGTQCDVNVIVLIGERGREVREFIELILGADGLARSVVVCATSDRSSIERAKAAYVGTAIAEYFRDRGLRVLLMMDSLTRFARAQREIGLAAGEPPTRRGFPPSVFAELPRLLERAGMGESGSITAFYTVLAEDDTGSDPIAEEVRGILDGHLILSREIAAKNQYPAIDVLASLSRVMSQIVPYDHSQAAGRLRRLLAKYNEVETLVQVGEYRQGSDAVADEAIDRIDAIRDFLSQPTDQLSAYENTLELLTSVTDDA.

173–178 (GVGKST) provides a ligand contact to ATP.

Belongs to the ATPase alpha/beta chains family. T3SS ATPase subfamily. In terms of assembly, the core secretion machinery of the T3SS is composed of approximately 20 different proteins, including cytoplasmic components, a base, an export apparatus and a needle. This subunit is part of the cytosolic complex. Forms homohexamers.

The protein localises to the cytoplasm. The enzyme catalyses ATP + H2O + cellular proteinSide 1 = ADP + phosphate + cellular proteinSide 2.. ATPase component of the type III secretion system (T3SS), also called injectisome, which is used to inject bacterial effector proteins into eukaryotic host cells. Acts as a molecular motor to provide the energy that is required for the export of proteins. Required for type III secretion apparatus (T3SA) formation, proper protein secretion, host cell invasion and virulence. May play a critical role in T3SS substrate recognition, disassembly of the effector/chaperone complex and unfolding of the effector in an ATP-dependent manner prior to secretion. The sequence is that of Type 3 secretion system ATPase from Xanthomonas euvesicatoria.